The chain runs to 324 residues: Adenosine kinase (324 aa).

Substrate contacts are provided by residues Ser-8, Asp-12, Ser-36, Gly-48, Asn-52, Phe-102, Phe-116, and 172-173 (QQ). ATP contacts are provided by residues Asn-195, 223-228 (TLGPKG), and Gly-256. Residue Asp-257 coordinates substrate. The active-site Proton acceptor is Asp-257.

It belongs to the carbohydrate kinase PfkB family. As to quaternary structure, homodimer. Mg(2+) is required as a cofactor.

The catalysed reaction is adenosine + ATP = AMP + ADP + H(+). The enzyme catalyses adenosine + GTP = GDP + AMP + H(+). It carries out the reaction dGTP + adenosine = dGDP + AMP + H(+). Its pathway is purine metabolism; AMP biosynthesis via salvage pathway; AMP from adenosine: step 1/1. Functionally, catalyzes the phosphorylation of adenosine to adenosine monophosphate (AMP). Prefers dGTP and GTP to ATP as phosphate donors in vitro. In Mycobacterium bovis (strain ATCC BAA-935 / AF2122/97), this protein is Adenosine kinase (adoK).